A 206-amino-acid polypeptide reads, in one-letter code: ATP synthase subunit b (206 aa).

The helical transmembrane segment at 14-34 (VMMPAAVCAAVIGLSALGFAA) threads the bilayer.

It belongs to the ATPase B chain family. As to quaternary structure, F-type ATPases have 2 components, F(1) - the catalytic core - and F(0) - the membrane proton channel. F(1) has five subunits: alpha(3), beta(3), gamma(1), delta(1), epsilon(1). F(0) has three main subunits: a(1), b(2) and c(10-14). The alpha and beta chains form an alternating ring which encloses part of the gamma chain. F(1) is attached to F(0) by a central stalk formed by the gamma and epsilon chains, while a peripheral stalk is formed by the delta and b chains.

The protein localises to the cell inner membrane. Its function is as follows. F(1)F(0) ATP synthase produces ATP from ADP in the presence of a proton or sodium gradient. F-type ATPases consist of two structural domains, F(1) containing the extramembraneous catalytic core and F(0) containing the membrane proton channel, linked together by a central stalk and a peripheral stalk. During catalysis, ATP synthesis in the catalytic domain of F(1) is coupled via a rotary mechanism of the central stalk subunits to proton translocation. Functionally, component of the F(0) channel, it forms part of the peripheral stalk, linking F(1) to F(0). The sequence is that of ATP synthase subunit b from Geobacter metallireducens (strain ATCC 53774 / DSM 7210 / GS-15).